We begin with the raw amino-acid sequence, 358 residues long: Photosystem II protein D1 2 (358 aa).

3 consecutive transmembrane segments (helical) span residues 28–45, 117–132, and 141–155; these read YVGW…AATI, HFLI…QWEL, and WICV…AAMA. H117 lines the chlorophyll a pocket. Y125 contacts pheophytin a. 2 residues coordinate [CaMn4O5] cluster: D169 and E188. The helical transmembrane segment at 196–217 threads the bilayer; the sequence is FHMLGVAGVFGGSLFSAMHGSL. Residue H197 coordinates chlorophyll a. Residues H214 and 263-264 each bind a quinone; that span reads SF. H214 is a Fe cation binding site. H271 lines the Fe cation pocket. A helical membrane pass occupies residues 273–287; it reads FLGAWPVVGIWFTSM. 4 residues coordinate [CaMn4O5] cluster: H331, E332, D341, and A343. Residues 344 to 358 constitute a propeptide that is removed on maturation; that stretch reads AAESTPVALQAPAIG.

This sequence belongs to the reaction center PufL/M/PsbA/D family. In terms of assembly, PSII is composed of 1 copy each of membrane proteins PsbA, PsbB, PsbC, PsbD, PsbE, PsbF, PsbH, PsbI, PsbJ, PsbK, PsbL, PsbM, PsbT, PsbX, PsbY, PsbZ, Psb30/Ycf12, peripheral proteins PsbO, CyanoQ (PsbQ), PsbU, PsbV and a large number of cofactors. It forms dimeric complexes. Requires The D1/D2 heterodimer binds P680, chlorophylls that are the primary electron donor of PSII, and subsequent electron acceptors. It shares a non-heme iron and each subunit binds pheophytin, quinone, additional chlorophylls, carotenoids and lipids. D1 provides most of the ligands for the Mn4-Ca-O5 cluster of the oxygen-evolving complex (OEC). There is also a Cl(-1) ion associated with D1 and D2, which is required for oxygen evolution. The PSII complex binds additional chlorophylls, carotenoids and specific lipids. as cofactor. Post-translationally, tyr-160 forms a radical intermediate that is referred to as redox-active TyrZ, YZ or Y-Z. C-terminally processed by CtpA; processing is essential to allow assembly of the oxygen-evolving complex and thus photosynthetic growth.

Its subcellular location is the cellular thylakoid membrane. The catalysed reaction is 2 a plastoquinone + 4 hnu + 2 H2O = 2 a plastoquinol + O2. Photosystem II (PSII) is a light-driven water:plastoquinone oxidoreductase that uses light energy to abstract electrons from H(2)O, generating O(2) and a proton gradient subsequently used for ATP formation. It consists of a core antenna complex that captures photons, and an electron transfer chain that converts photonic excitation into a charge separation. The D1/D2 (PsbA/PsbD) reaction center heterodimer binds P680, the primary electron donor of PSII as well as several subsequent electron acceptors. The chain is Photosystem II protein D1 2 from Synechococcus sp. (strain CC9605).